A 571-amino-acid polypeptide reads, in one-letter code: Probable serine/threonine-protein kinase WNK4 (571 aa).

The Protein kinase domain occupies 19-277; sequence GRFAEILGRG…AKELLQDPFL (259 aa). ATP is bound by residues 99–102 and Lys-149; that span reads TELF. The active-site Proton acceptor is Asp-166. The disordered stretch occupies residues 396–425; the sequence is EDDETPHDHHRHRTDSFHSSSSHASSSQAS. A compositionally biased stretch (low complexity) spans 412–425; sequence FHSSSSHASSSQAS. Residue Ser-522 is modified to Phosphoserine.

The protein belongs to the protein kinase superfamily. Ser/Thr protein kinase family. WNK subfamily.

It carries out the reaction L-seryl-[protein] + ATP = O-phospho-L-seryl-[protein] + ADP + H(+). It catalyses the reaction L-threonyl-[protein] + ATP = O-phospho-L-threonyl-[protein] + ADP + H(+). May regulate flowering time by modulating the photoperiod pathway. This is Probable serine/threonine-protein kinase WNK4 (WNK4) from Arabidopsis thaliana (Mouse-ear cress).